A 77-amino-acid polypeptide reads, in one-letter code: Translation initiation factor IF-1, chloroplastic (77 aa).

Residues 1–71 (MKEQKLIHEG…TRGRIIYRLR (71 aa)) enclose the S1-like domain.

Belongs to the IF-1 family. Component of the 30S ribosomal translation pre-initiation complex which assembles on the 30S ribosome in the order IF-2 and IF-3, IF-1 and N-formylmethionyl-tRNA(fMet); mRNA recruitment can occur at any time during PIC assembly.

It localises to the plastid. The protein localises to the chloroplast. In terms of biological role, one of the essential components for the initiation of protein synthesis. Stabilizes the binding of IF-2 and IF-3 on the 30S subunit to which N-formylmethionyl-tRNA(fMet) subsequently binds. Helps modulate mRNA selection, yielding the 30S pre-initiation complex (PIC). Upon addition of the 50S ribosomal subunit IF-1, IF-2 and IF-3 are released leaving the mature 70S translation initiation complex. The protein is Translation initiation factor IF-1, chloroplastic of Phalaenopsis aphrodite subsp. formosana (Moth orchid).